A 168-amino-acid chain; its full sequence is 2-C-methyl-D-erythritol 2,4-cyclodiphosphate synthase (168 aa).

A divalent metal cation is bound by residues aspartate 11 and histidine 13. 4-CDP-2-C-methyl-D-erythritol 2-phosphate contacts are provided by residues 11-13 and 41-42; these read DVH and HS. An a divalent metal cation-binding site is contributed by histidine 49. 4-CDP-2-C-methyl-D-erythritol 2-phosphate contacts are provided by residues 63–65, 68–72, 139–142, phenylalanine 146, and arginine 149; these read DIG, FPDTD, and TTTE.

Belongs to the IspF family. As to quaternary structure, homotrimer. A divalent metal cation is required as a cofactor.

The enzyme catalyses 4-CDP-2-C-methyl-D-erythritol 2-phosphate = 2-C-methyl-D-erythritol 2,4-cyclic diphosphate + CMP. It functions in the pathway isoprenoid biosynthesis; isopentenyl diphosphate biosynthesis via DXP pathway; isopentenyl diphosphate from 1-deoxy-D-xylulose 5-phosphate: step 4/6. Its function is as follows. Involved in the biosynthesis of isopentenyl diphosphate (IPP) and dimethylallyl diphosphate (DMAPP), two major building blocks of isoprenoid compounds. Catalyzes the conversion of 4-diphosphocytidyl-2-C-methyl-D-erythritol 2-phosphate (CDP-ME2P) to 2-C-methyl-D-erythritol 2,4-cyclodiphosphate (ME-CPP) with a corresponding release of cytidine 5-monophosphate (CMP). In Psychrobacter arcticus (strain DSM 17307 / VKM B-2377 / 273-4), this protein is 2-C-methyl-D-erythritol 2,4-cyclodiphosphate synthase.